The chain runs to 267 residues: Protein COFACTOR ASSEMBLY OF COMPLEX C SUBUNIT B CCB1, chloroplastic (267 aa).

The N-terminal 44 residues, Met-1 to Thr-44, are a transit peptide targeting the chloroplast. Over Ala-45–Leu-84 the chain is Lumenal. Residues Ala-85 to Ile-105 traverse the membrane as a helical segment. Topologically, residues Lys-106–Gln-164 are stromal. The chain crosses the membrane as a helical span at residues Ala-165–Ile-185. Thr-186 is a topological domain (lumenal). Residues Val-187–Tyr-207 traverse the membrane as a helical segment. Over Tyr-208 to Ser-267 the chain is Stromal.

It is found in the plastid. Its subcellular location is the chloroplast thylakoid membrane. Required for the biogenesis and accumulation of native cytochrome b6 in the thylakoid membrane. Controls the conversion of apocytochrome b6 to holocytochrome b6. Required for covalent binding of the c-type heme to cytochrome b6. In Arabidopsis thaliana (Mouse-ear cress), this protein is Protein COFACTOR ASSEMBLY OF COMPLEX C SUBUNIT B CCB1, chloroplastic.